The primary structure comprises 50 residues: Large ribosomal subunit protein bL33A (50 aa).

It belongs to the bacterial ribosomal protein bL33 family.

This Streptococcus thermophilus (strain CNRZ 1066) protein is Large ribosomal subunit protein bL33A.